Reading from the N-terminus, the 96-residue chain is Small ribosomal subunit protein bS18 (96 aa).

A disordered region spans residues 1 to 20 (MSHGGKRRSGDGGSEGSSYS).

The protein belongs to the bacterial ribosomal protein bS18 family. In terms of assembly, part of the 30S ribosomal subunit. Forms a tight heterodimer with protein bS6.

Functionally, binds as a heterodimer with protein bS6 to the central domain of the 16S rRNA, where it helps stabilize the platform of the 30S subunit. The protein is Small ribosomal subunit protein bS18 of Anaplasma phagocytophilum (strain HZ).